The primary structure comprises 157 residues: Large ribosomal subunit protein eL29 (157 aa).

Over residues 1 to 26 (MAKSKNHTTHNQSRKWHRNGIKKPRS) the composition is skewed to basic residues. Residues 1–32 (MAKSKNHTTHNQSRKWHRNGIKKPRSQRYESL) are disordered. Position 5 is an N6-methyllysine (K5). A Phosphoserine modification is found at S31. K33 is modified (N6-acetyllysine). Positions 121 to 157 (PKAKAKAKDQTKAQAAAPASIPAQAPKGAQATTKATE) are disordered. The span at 132-147 (KAQAAAPASIPAQAPK) shows a compositional bias: low complexity. Residue S140 is modified to Phosphoserine.

The protein belongs to the eukaryotic ribosomal protein eL29 family. Component of the large ribosomal subunit.

Its subcellular location is the cytoplasm. In terms of biological role, component of the large ribosomal subunit. The ribosome is a large ribonucleoprotein complex responsible for the synthesis of proteins in the cell. This chain is Large ribosomal subunit protein eL29 (RPL29), found in Macaca fascicularis (Crab-eating macaque).